The chain runs to 297 residues: Glycerol-3-phosphate dehydrogenase [NAD(P)+] (297 aa).

NADPH is bound by residues tryptophan 11, arginine 30, and lysine 79. Lysine 79, glycine 107, and serine 109 together coordinate sn-glycerol 3-phosphate. Alanine 111 serves as a coordination point for NADPH. Sn-glycerol 3-phosphate is bound by residues lysine 161, aspartate 214, serine 224, arginine 225, and asparagine 226. The Proton acceptor role is filled by lysine 161. An NADPH-binding site is contributed by arginine 225. Residues valine 249 and glutamate 251 each coordinate NADPH.

This sequence belongs to the NAD-dependent glycerol-3-phosphate dehydrogenase family.

It is found in the cytoplasm. The catalysed reaction is sn-glycerol 3-phosphate + NAD(+) = dihydroxyacetone phosphate + NADH + H(+). The enzyme catalyses sn-glycerol 3-phosphate + NADP(+) = dihydroxyacetone phosphate + NADPH + H(+). It participates in membrane lipid metabolism; glycerophospholipid metabolism. Its function is as follows. Catalyzes the reduction of the glycolytic intermediate dihydroxyacetone phosphate (DHAP) to sn-glycerol 3-phosphate (G3P), the key precursor for phospholipid synthesis. The chain is Glycerol-3-phosphate dehydrogenase [NAD(P)+] from Wolinella succinogenes (strain ATCC 29543 / DSM 1740 / CCUG 13145 / JCM 31913 / LMG 7466 / NCTC 11488 / FDC 602W) (Vibrio succinogenes).